The chain runs to 549 residues: Oxygen-dependent choline dehydrogenase (549 aa).

4-33 provides a ligand contact to FAD; it reads DFVIIGSGSAGSAMAYRLSEDGRYSVIVIE. The Proton acceptor role is filled by H465.

This sequence belongs to the GMC oxidoreductase family. The cofactor is FAD.

It catalyses the reaction choline + A = betaine aldehyde + AH2. The enzyme catalyses betaine aldehyde + NAD(+) + H2O = glycine betaine + NADH + 2 H(+). Its pathway is amine and polyamine biosynthesis; betaine biosynthesis via choline pathway; betaine aldehyde from choline (cytochrome c reductase route): step 1/1. Involved in the biosynthesis of the osmoprotectant glycine betaine. Catalyzes the oxidation of choline to betaine aldehyde and betaine aldehyde to glycine betaine at the same rate. This chain is Oxygen-dependent choline dehydrogenase, found in Brucella canis (strain ATCC 23365 / NCTC 10854 / RM-666).